Reading from the N-terminus, the 482-residue chain is Glutamate--tRNA ligase (482 aa).

Residues Pro-9–Gly-19 carry the 'HIGH' region motif. Positions Lys-252–Arg-256 match the 'KMSKS' region motif. An ATP-binding site is contributed by Lys-255.

It belongs to the class-I aminoacyl-tRNA synthetase family. Glutamate--tRNA ligase type 1 subfamily. In terms of assembly, monomer.

The protein resides in the cytoplasm. The enzyme catalyses tRNA(Glu) + L-glutamate + ATP = L-glutamyl-tRNA(Glu) + AMP + diphosphate. Its function is as follows. Catalyzes the attachment of glutamate to tRNA(Glu) in a two-step reaction: glutamate is first activated by ATP to form Glu-AMP and then transferred to the acceptor end of tRNA(Glu). This chain is Glutamate--tRNA ligase, found in Ureaplasma parvum serovar 3 (strain ATCC 27815 / 27 / NCTC 11736).